Consider the following 311-residue polypeptide: Ribosomal RNA large subunit methyltransferase F (311 aa).

This sequence belongs to the methyltransferase superfamily. METTL16/RlmF family.

It localises to the cytoplasm. It catalyses the reaction adenosine(1618) in 23S rRNA + S-adenosyl-L-methionine = N(6)-methyladenosine(1618) in 23S rRNA + S-adenosyl-L-homocysteine + H(+). In terms of biological role, specifically methylates the adenine in position 1618 of 23S rRNA. This Pectobacterium carotovorum subsp. carotovorum (strain PC1) protein is Ribosomal RNA large subunit methyltransferase F.